The following is a 323-amino-acid chain: Lipoyl synthase (323 aa).

Residues cysteine 69, cysteine 74, cysteine 80, cysteine 95, cysteine 99, cysteine 102, and serine 310 each contribute to the [4Fe-4S] cluster site. The Radical SAM core domain occupies 81–299 (WTHGTLTVMI…EAWGYELGFR (219 aa)).

Belongs to the radical SAM superfamily. Lipoyl synthase family. It depends on [4Fe-4S] cluster as a cofactor.

The protein resides in the cytoplasm. It catalyses the reaction [[Fe-S] cluster scaffold protein carrying a second [4Fe-4S](2+) cluster] + N(6)-octanoyl-L-lysyl-[protein] + 2 oxidized [2Fe-2S]-[ferredoxin] + 2 S-adenosyl-L-methionine + 4 H(+) = [[Fe-S] cluster scaffold protein] + N(6)-[(R)-dihydrolipoyl]-L-lysyl-[protein] + 4 Fe(3+) + 2 hydrogen sulfide + 2 5'-deoxyadenosine + 2 L-methionine + 2 reduced [2Fe-2S]-[ferredoxin]. Its pathway is protein modification; protein lipoylation via endogenous pathway; protein N(6)-(lipoyl)lysine from octanoyl-[acyl-carrier-protein]: step 2/2. Functionally, catalyzes the radical-mediated insertion of two sulfur atoms into the C-6 and C-8 positions of the octanoyl moiety bound to the lipoyl domains of lipoate-dependent enzymes, thereby converting the octanoylated domains into lipoylated derivatives. This is Lipoyl synthase from Thermus thermophilus (strain ATCC 27634 / DSM 579 / HB8).